A 111-amino-acid chain; its full sequence is Nucleoid-associated protein PSEEN1789 (111 aa).

Disordered stretches follow at residues 1 to 25 (MMKG…KMQE) and 89 to 111 (NSQD…KMPF).

The protein belongs to the YbaB/EbfC family. As to quaternary structure, homodimer.

The protein localises to the cytoplasm. Its subcellular location is the nucleoid. Its function is as follows. Binds to DNA and alters its conformation. May be involved in regulation of gene expression, nucleoid organization and DNA protection. This Pseudomonas entomophila (strain L48) protein is Nucleoid-associated protein PSEEN1789.